Consider the following 341-residue polypeptide: Hyaluronan and proteoglycan link protein 2 (341 aa).

An N-terminal signal peptide occupies residues 1–27 (MPSRIPLPAFCCFLLPWAFTSFHKALG). One can recognise an Ig-like V-type domain in the interval 35–143 (PHYLLPPIHE…GIEDESVALT (109 aa)). Disulfide bonds link Cys58-Cys129, Cys171-Cys241, Cys195-Cys216, Cys266-Cys337, and Cys291-Cys312. Link domains follow at residues 149–243 (VVFP…FCFT) and 246–339 (LAGQ…YCYA).

This sequence belongs to the HAPLN family. In terms of tissue distribution, brain. Predominantly expressed by neurons. Colocalizes with versican V2 in developing and adult cerebellar white matter and at the nodes of Ranvier.

It localises to the secreted. The protein resides in the extracellular space. It is found in the extracellular matrix. In terms of biological role, mediates a firm binding of versican V2 to hyaluronic acid. May play a pivotal role in the formation of the hyaluronan-associated matrix in the central nervous system (CNS) which facilitates neuronal conduction and general structural stabilization. Binds to hyaluronic acid. The chain is Hyaluronan and proteoglycan link protein 2 (Hapln2) from Mus musculus (Mouse).